The following is a 633-amino-acid chain: tRNA uridine 5-carboxymethylaminomethyl modification enzyme MnmG (633 aa).

FAD contacts are provided by residues 15-20 (GAGHAG), Ile127, and Ser182. Position 276–290 (276–290 (GPRYCPSIEDKIVRF)) interacts with NAD(+). An FAD-binding site is contributed by Gln373.

It belongs to the MnmG family. As to quaternary structure, homodimer. Heterotetramer of two MnmE and two MnmG subunits. FAD serves as cofactor.

It localises to the cytoplasm. Its function is as follows. NAD-binding protein involved in the addition of a carboxymethylaminomethyl (cmnm) group at the wobble position (U34) of certain tRNAs, forming tRNA-cmnm(5)s(2)U34. This Streptococcus agalactiae serotype Ia (strain ATCC 27591 / A909 / CDC SS700) protein is tRNA uridine 5-carboxymethylaminomethyl modification enzyme MnmG.